The following is an 88-amino-acid chain: Putative membrane protein insertion efficiency factor (88 aa).

It belongs to the UPF0161 family.

The protein localises to the cell inner membrane. In terms of biological role, could be involved in insertion of integral membrane proteins into the membrane. In Burkholderia vietnamiensis (strain G4 / LMG 22486) (Burkholderia cepacia (strain R1808)), this protein is Putative membrane protein insertion efficiency factor.